Reading from the N-terminus, the 469-residue chain is ATP synthase subunit beta (469 aa).

153-160 (GGAGVGKT) contacts ATP.

The protein belongs to the ATPase alpha/beta chains family. F-type ATPases have 2 components, CF(1) - the catalytic core - and CF(0) - the membrane proton channel. CF(1) has five subunits: alpha(3), beta(3), gamma(1), delta(1), epsilon(1). CF(0) has three main subunits: a(1), b(2) and c(9-12). The alpha and beta chains form an alternating ring which encloses part of the gamma chain. CF(1) is attached to CF(0) by a central stalk formed by the gamma and epsilon chains, while a peripheral stalk is formed by the delta and b chains.

It localises to the cell membrane. The enzyme catalyses ATP + H2O + 4 H(+)(in) = ADP + phosphate + 5 H(+)(out). In terms of biological role, produces ATP from ADP in the presence of a proton gradient across the membrane. The catalytic sites are hosted primarily by the beta subunits. This is ATP synthase subunit beta from Pediococcus pentosaceus (strain ATCC 25745 / CCUG 21536 / LMG 10740 / 183-1w).